Here is a 481-residue protein sequence, read N- to C-terminus: Glutamate--tRNA ligase 1 (481 aa).

Residues 11–21 carry the 'HIGH' region motif; sequence PSPTGSLHIGG. The short motif at 244–248 is the 'KMSKS' region element; sequence KLSKR. Lys247 serves as a coordination point for ATP.

It belongs to the class-I aminoacyl-tRNA synthetase family. Glutamate--tRNA ligase type 1 subfamily. Monomer.

The protein resides in the cytoplasm. The catalysed reaction is tRNA(Glu) + L-glutamate + ATP = L-glutamyl-tRNA(Glu) + AMP + diphosphate. Functionally, catalyzes the attachment of glutamate to tRNA(Glu) in a two-step reaction: glutamate is first activated by ATP to form Glu-AMP and then transferred to the acceptor end of tRNA(Glu). This chain is Glutamate--tRNA ligase 1, found in Caldanaerobacter subterraneus subsp. tengcongensis (strain DSM 15242 / JCM 11007 / NBRC 100824 / MB4) (Thermoanaerobacter tengcongensis).